We begin with the raw amino-acid sequence, 371 residues long: Chaperone protein DnaJ (371 aa).

The J domain maps to 5–70 (CYYEILNISK…SKRSRYDQFG (66 aa)). The CR-type zinc-finger motif lies at 127-204 (GVEKEITIPR…CYGNGKVKKQ (78 aa)). Zn(2+) is bound by residues Cys-140, Cys-143, Cys-156, Cys-159, Cys-178, Cys-181, Cys-192, and Cys-195. CXXCXGXG motif repeat units lie at residues 140–147 (CDSCDGTG), 156–163 (CHACHGQG), 178–185 (CPVCNGTG), and 192–199 (CDACYGNG).

It belongs to the DnaJ family. As to quaternary structure, homodimer. The cofactor is Zn(2+).

It localises to the cytoplasm. In terms of biological role, participates actively in the response to hyperosmotic and heat shock by preventing the aggregation of stress-denatured proteins and by disaggregating proteins, also in an autonomous, DnaK-independent fashion. Unfolded proteins bind initially to DnaJ; upon interaction with the DnaJ-bound protein, DnaK hydrolyzes its bound ATP, resulting in the formation of a stable complex. GrpE releases ADP from DnaK; ATP binding to DnaK triggers the release of the substrate protein, thus completing the reaction cycle. Several rounds of ATP-dependent interactions between DnaJ, DnaK and GrpE are required for fully efficient folding. Also involved, together with DnaK and GrpE, in the DNA replication of plasmids through activation of initiation proteins. This Francisella tularensis subsp. holarctica (strain LVS) protein is Chaperone protein DnaJ.